The following is a 982-amino-acid chain: Chromosome partition protein Smc (982 aa).

33–40 (PNGSGKSN) provides a ligand contact to ATP. Coiled coils occupy residues 171 to 235 (RYTK…LVAD) and 263 to 377 (QLQL…NLNQ). One can recognise an SMC hinge domain in the interval 416–535 (TGLLNTLNTF…ASDLQAALKL (120 aa)). Coiled-coil stretches lie at residues 568 to 627 (LSLY…ERVN), 669 to 713 (AERD…RSQL), and 753 to 818 (IKLS…EIDE).

Belongs to the SMC family. As to quaternary structure, homodimer.

The protein localises to the cytoplasm. Its function is as follows. Required for chromosome condensation and partitioning. The polypeptide is Chromosome partition protein Smc (Mycoplasma pneumoniae (strain ATCC 29342 / M129 / Subtype 1) (Mycoplasmoides pneumoniae)).